Consider the following 158-residue polypeptide: Eukaryotic translation initiation factor 5A-3 (158 aa).

The span at Met1–Ser10 shows a compositional bias: basic and acidic residues. Residues Met1–Ala23 are disordered. Ser2 carries the phosphoserine modification. Position 51 is a hypusine (Lys51).

It belongs to the eIF-5A family. In terms of processing, lys-52 undergoes hypusination, a unique post-translational modification that consists in the addition of a butylamino group from spermidine to lysine side chain, leading to the formation of the unusual amino acid hypusine. eIF-5As are the only known proteins to undergo this modification, which is essential for their function. As to expression, expressed in the vascular tissues of roots, stems and leaves. Localized in phloem companion cells rather than sieve-tube members. Not expressed in xylem or procambium. Detected in root tips and in the chalazal tissue of fertilized ovules.

In terms of biological role, translation factor that promotes translation elongation and termination, particularly upon ribosome stalling at specific amino acid sequence contexts. Binds between the exit (E) and peptidyl (P) site of the ribosome and promotes rescue of stalled ribosome: specifically required for efficient translation of polyproline-containing peptides as well as other motifs that stall the ribosome. Acts as a ribosome quality control (RQC) cofactor by joining the RQC complex to facilitate peptidyl transfer during CAT tailing step. Involved in supporting growth and plays a regulatory role in the response to sub-lethal osmotic and nutrient stress. The polypeptide is Eukaryotic translation initiation factor 5A-3 (ELF5A-3) (Arabidopsis thaliana (Mouse-ear cress)).